The primary structure comprises 296 residues: ATP synthase peripheral stalk subunit OSCP, mitochondrial (296 aa).

The protein belongs to the ATPase delta chain family. As to quaternary structure, component of the ATP synthase complex composed at least of ATP5F1A/subunit alpha, ATP5F1B/subunit beta, ATP5MC1/subunit c (homooctomer), MT-ATP6/subunit a, MT-ATP8/subunit 8, ATP5ME/subunit e, ATP5MF/subunit f, ATP5MG/subunit g, ATP5MK/subunit k, ATP5MJ/subunit j, ATP5F1C/subunit gamma, ATP5F1D/subunit delta, ATP5F1E/subunit epsilon, ATP5PF/subunit F6, ATP5PB/subunit b, ATP5PD/subunit d, ATP5PO/subunit OSCP. ATP synthase complex consists of a soluble F(1) head domain (subunits alpha(3) and beta(3)) - the catalytic core - and a membrane F(0) domain - the membrane proton channel (subunits c, a, 8, e, f, g, k and j). These two domains are linked by a central stalk (subunits gamma, delta, and epsilon) rotating inside the F1 region and a stationary peripheral stalk (subunits F6, b, d, and OSCP).

The protein resides in the mitochondrion. It is found in the mitochondrion inner membrane. In terms of biological role, subunit OSCP, of the mitochondrial membrane ATP synthase complex (F(1)F(0) ATP synthase or Complex V) that produces ATP from ADP in the presence of a proton gradient across the membrane which is generated by electron transport complexes of the respiratory chain. ATP synthase complex consist of a soluble F(1) head domain - the catalytic core - and a membrane F(1) domain - the membrane proton channel. These two domains are linked by a central stalk rotating inside the F(1) region and a stationary peripheral stalk. During catalysis, ATP synthesis in the catalytic domain of F(1) is coupled via a rotary mechanism of the central stalk subunits to proton translocation. In vivo, can only synthesize ATP although its ATP hydrolase activity can be activated artificially in vitro. Part of the complex F(0) domain. Part of the complex F(0) domain and the peripheric stalk, which acts as a stator to hold the catalytic alpha(3)beta(3) subcomplex and subunit a/ATP6 static relative to the rotary elements. This is ATP synthase peripheral stalk subunit OSCP, mitochondrial from Dictyostelium discoideum (Social amoeba).